Reading from the N-terminus, the 728-residue chain is Ophiobolin F synthase oblA (728 aa).

Residues 1-322 form a (7Z)-ophiobola-7,19-dien-3-ol synthase region; sequence MEYKYSTIVD…RYHFPGRWNE (322 aa). Mg(2+) contacts are provided by Asp-93 and Asp-97. Asp-93 serves as a coordination point for substrate. Residues 93 to 97 carry the DDXXD 1 motif; that stretch reads DDEID. Residues 182–185, Asn-226, 230–234, and 313–314 each bind substrate; these read RCMD, SYEKE, and RY. The short motif at 226-234 is the NSE/DTE element; it reads NDLFSYEKE. The tract at residues 323 to 728 is geranylfarnesyl diphosphate synthase; that stretch reads LQKLRAEHGI…LRLMVDMLKV (406 aa). The segment covering 362 to 371 has biased composition (low complexity); sequence GINGTNGVNG. Positions 362–394 are disordered; it reads GINGTNGVNGKRNRDEDGDENDARINGNGFKKP. Residues Lys-439, Arg-442, and His-471 each contribute to the isopentenyl diphosphate site. Mg(2+)-binding residues include Asp-478 and Asp-482. Residues 478 to 482 carry the DDXXD 2 motif; the sequence is DDIED. Arg-487 serves as a coordination point for dimethylallyl diphosphate. Arg-488 serves as a coordination point for isopentenyl diphosphate. Residues Lys-565, Thr-566, Gln-604, Asn-611, Lys-621, and Lys-631 each coordinate dimethylallyl diphosphate.

It in the N-terminal section; belongs to the terpene synthase family. The protein in the C-terminal section; belongs to the FPP/GGPP synthase family. Mg(2+) serves as cofactor.

The catalysed reaction is isopentenyl diphosphate + (2E,6E)-farnesyl diphosphate = (2E,6E,10E)-geranylgeranyl diphosphate + diphosphate. It carries out the reaction isopentenyl diphosphate + (2E,6E,10E)-geranylgeranyl diphosphate = (2E,6E,10E,14E)-geranylfarnesyl diphosphate + diphosphate. The enzyme catalyses (2E,6E,10E,14E)-geranylfarnesyl diphosphate + H2O = ophiobolin F + diphosphate. It participates in secondary metabolite biosynthesis; terpenoid biosynthesis. Functionally, bifunctional sesterterpene synthase; part of the gene cluster that mediates the biosynthesis of the sesterterpenes ophiobolins, fungal phytotoxins with potential anti-cancer activities. The first step of the pathway is performed by the sesterterpene synthase oblA that possesses both prenyl transferase and terpene cyclase activity, converting isopentenyl diphosphate and dimethylallyl diphosphate into geranylfarnesyl diphosphate (GFPP) and further converting GFPP into ophiobolin F, respectively. Other sesterterpenoids (C(25) terpenoids) are found as minor products of oblA. The cytochrome P450 monooxygenase oblB then catalyzes a four-step oxidative transformation of ophiobolin F to yield ophiobolin C. The function of the cytochrome P450 monooxygenase oblE has still to be determined. The sequence is that of Ophiobolin F synthase oblA from Emericella variicolor (Aspergillus stellatus).